We begin with the raw amino-acid sequence, 642 residues long: Frizzled-1 (642 aa).

Residues 1 to 68 (MAEEAAPSES…WLLEAPLLLG (68 aa)) form the signal peptide. 2 disordered regions span residues 26–45 (PGRR…RPRA) and 76–99 (QVSG…QYNG). Residues 69–317 (VRAQAAGQVS…PEELRFSRTW (249 aa)) are Extracellular-facing. In terms of domain architecture, FZ spans 106–225 (PDHGYCQPIS…HGAGELCVGQ (120 aa)). Intrachain disulfides connect cysteine 111–cysteine 172, cysteine 119–cysteine 165, cysteine 156–cysteine 193, cysteine 182–cysteine 222, and cysteine 186–cysteine 210. N-linked (GlcNAc...) asparagine glycosylation is present at asparagine 125. A glycan (N-linked (GlcNAc...) asparagine) is linked at asparagine 226. The chain crosses the membrane as a helical span at residues 318–338 (IGIWSVLCCASTLFTVLTYLV). At 339 to 349 (DMRRFSYPERP) the chain is on the cytoplasmic side. The helical transmembrane segment at 350–370 (IIFLSGCYTAVAVAYIAGFLL) threads the bilayer. Residues 371–397 (EDRVVCNDKFAEDGARTVAQGTKKEGC) are Extracellular-facing. Residues 398–418 (TILFMMLYFFSMASSIWWVIL) traverse the membrane as a helical segment. The Cytoplasmic portion of the chain corresponds to 419-440 (SLTWFLAAGMKWGHEAIEANSQ). Residues 441–461 (YFHLAAWAVPAIKTITILALG) traverse the membrane as a helical segment. Residues 462–484 (QVDGDVLSGVCFVGLNNVDALRG) are Extracellular-facing. Residues 485 to 505 (FVLAPLFVYLFIGTSFLLAGF) form a helical membrane-spanning segment. At 506–531 (VSLFRIRTIMKHDGTKTEKLEKLMVR) the chain is on the cytoplasmic side. Residues 532-552 (IGVFSVLYTVPATIVIACYFY) form a helical membrane-spanning segment. At 553–593 (EQAFRDQWERSWVAQSCKSYAIPCPHLQGGGGVPPHPPMSP) the chain is on the extracellular side. A helical transmembrane segment spans residues 594–614 (DFTVFMIKYLMTLIVGITSGF). Topologically, residues 615–642 (WIWSGKTLNSWRKFYTRLTNSKQGETTV) are cytoplasmic. The Lys-Thr-X-X-X-Trp motif, mediates interaction with the PDZ domain of Dvl family members motif lies at 620–625 (KTLNSW). The PDZ-binding motif lies at 640 to 642 (TTV).

This sequence belongs to the G-protein coupled receptor Fz/Smo family. In terms of assembly, interacts with MYOC. Interacts with WNT7B. Ubiquitinated by ZNRF3, leading to its degradation by the proteasome. Expressed in chondrocytes.

Its subcellular location is the cell membrane. Receptor for Wnt proteins. Activated by WNT7B. Activated by WNT3A, WNT3, WNT1 and to a lesser extent WNT2, but apparently not by WNT4, WNT5A, WNT5B, WNT6, WNT7A or WNT7B. Contradictory results showing activation by WNT7B have been described for mouse. Functions in the canonical Wnt/beta-catenin signaling pathway. The canonical Wnt/beta-catenin signaling pathway leads to the activation of disheveled proteins, inhibition of GSK-3 kinase, nuclear accumulation of beta-catenin and activation of Wnt target genes. A second signaling pathway involving PKC and calcium fluxes has been seen for some family members, but it is not yet clear if it represents a distinct pathway or if it can be integrated in the canonical pathway, as PKC seems to be required for Wnt-mediated inactivation of GSK-3 kinase. Both pathways seem to involve interactions with G-proteins. May be involved in transduction and intercellular transmission of polarity information during tissue morphogenesis and/or in differentiated tissues. The polypeptide is Frizzled-1 (Fzd1) (Mus musculus (Mouse)).